The chain runs to 91 residues: Progonadoliberin-1 (91 aa).

Residues 1–21 (MVVKTWMPWLLVSSVLSQGCC) form the signal peptide. Pyrrolidone carboxylic acid is present on Q22. Residue G31 is modified to Glycine amide.

Belongs to the GnRH family. Expressed in the cell bodies of a cluster of neurons in the preoptic region.

The protein localises to the secreted. Functionally, stimulates the secretion of gonadotropins. The sequence is that of Progonadoliberin-1 (gnrh1) from Oryzias latipes (Japanese rice fish).